The chain runs to 259 residues: Probable kinetochore protein spc25 (259 aa).

The segment covering Met-1–Gln-20 has biased composition (polar residues). The tract at residues Met-1–Ser-25 is disordered. Positions Arg-59–Arg-162 form a coiled coil.

Belongs to the SPC25 family. As to quaternary structure, component of the NDC80 complex, which consists of kpr-1/ndc80, kpr-2/nuf2, kpr-3/spc24 and kpr-4/spc25.

It localises to the nucleus. The protein localises to the chromosome. Its subcellular location is the centromere. The protein resides in the kinetochore. Its function is as follows. Acts as a component of the essential kinetochore-associated NDC80 complex, which is required for chromosome segregation and spindle checkpoint activity. This chain is Probable kinetochore protein spc25 (kpr-4), found in Neurospora crassa (strain ATCC 24698 / 74-OR23-1A / CBS 708.71 / DSM 1257 / FGSC 987).